Here is a 429-residue protein sequence, read N- to C-terminus: Adenylosuccinate synthetase (429 aa).

GTP is bound by residues Gly12–Lys18 and Gly40–Thr42. Residue Asp13 is the Proton acceptor of the active site. Mg(2+) contacts are provided by Asp13 and Gly40. IMP is bound by residues Asp13–Lys16, Asn38–His41, Thr128, Arg142, Gln223, Thr238, and Arg302. His41 functions as the Proton donor in the catalytic mechanism. A substrate-binding site is contributed by Thr298 to Arg304. GTP contacts are provided by residues Arg304, Ser330–Asp332, and Ser412–Gly414.

The protein belongs to the adenylosuccinate synthetase family. In terms of assembly, homodimer. Requires Mg(2+) as cofactor.

It is found in the cytoplasm. It catalyses the reaction IMP + L-aspartate + GTP = N(6)-(1,2-dicarboxyethyl)-AMP + GDP + phosphate + 2 H(+). It participates in purine metabolism; AMP biosynthesis via de novo pathway; AMP from IMP: step 1/2. Its function is as follows. Plays an important role in the de novo pathway of purine nucleotide biosynthesis. Catalyzes the first committed step in the biosynthesis of AMP from IMP. This Bacillus cytotoxicus (strain DSM 22905 / CIP 110041 / 391-98 / NVH 391-98) protein is Adenylosuccinate synthetase.